A 271-amino-acid polypeptide reads, in one-letter code: Putative hydro-lyase OCAR_7359/OCA5_c07590 (271 aa).

Belongs to the D-glutamate cyclase family.

The chain is Putative hydro-lyase OCAR_7359/OCA5_c07590 from Afipia carboxidovorans (strain ATCC 49405 / DSM 1227 / KCTC 32145 / OM5) (Oligotropha carboxidovorans).